Here is a 140-residue protein sequence, read N- to C-terminus: Large ribosomal subunit protein uL16 (140 aa).

This sequence belongs to the universal ribosomal protein uL16 family. Part of the 50S ribosomal subunit.

Functionally, binds 23S rRNA and is also seen to make contacts with the A and possibly P site tRNAs. The sequence is that of Large ribosomal subunit protein uL16 from Cytophaga hutchinsonii (strain ATCC 33406 / DSM 1761 / CIP 103989 / NBRC 15051 / NCIMB 9469 / D465).